The primary structure comprises 230 residues: UPF0173 metal-dependent hydrolase Mbar_A3716 (230 aa).

The protein belongs to the UPF0173 family.

In Methanosarcina barkeri (strain Fusaro / DSM 804), this protein is UPF0173 metal-dependent hydrolase Mbar_A3716.